Here is a 322-residue protein sequence, read N- to C-terminus: Myeloid-associated differentiation marker (322 aa).

Residues 1-18 are compositionally biased toward low complexity; the sequence is MPVTVTRTTITTTTTSSS. Positions 1–21 are disordered; it reads MPVTVTRTTITTTTTSSSGLG. Ser22 bears the Phosphoserine mark. 2 consecutive MARVEL domains span residues 31-163 and 168-319; these read ALTQ…ARPG and YMAT…HLVF. The next 8 membrane-spanning stretches (helical) occupy residues 41–61, 70–90, 101–121, 137–157, 171–191, 203–223, 239–259, and 294–314; these read LLQL…GAWT, FTWC…LCGL, FPIT…IIYP, AIAA…EVAW, TVPG…FAFI, LEWC…AILL, FLSG…VLWP, and LAVA…LVHS.

Belongs to the MAL family. As to expression, widely expressed. Not detected in thymus.

It is found in the membrane. The protein is Myeloid-associated differentiation marker (MYADM) of Homo sapiens (Human).